Here is a 568-residue protein sequence, read N- to C-terminus: Phenylalanine--tRNA ligase beta subunit (568 aa).

Residues 278 to 353 form the B5 domain; it reads LTPKSFEVEL…IAYGYNEIEP (76 aa). Aspartate 331, aspartate 337, glutamate 340, and aspartate 341 together coordinate Mg(2+).

The protein belongs to the phenylalanyl-tRNA synthetase beta subunit family. Type 2 subfamily. Tetramer of two alpha and two beta subunits. Requires Mg(2+) as cofactor.

It localises to the cytoplasm. The catalysed reaction is tRNA(Phe) + L-phenylalanine + ATP = L-phenylalanyl-tRNA(Phe) + AMP + diphosphate + H(+). In Thermococcus gammatolerans (strain DSM 15229 / JCM 11827 / EJ3), this protein is Phenylalanine--tRNA ligase beta subunit.